A 455-amino-acid chain; its full sequence is Trigger factor (455 aa).

Residues 169 to 262 form the PPIase FKBP-type domain; that stretch reads GDVAIVDYEG…VKELKAKELP (94 aa).

Belongs to the FKBP-type PPIase family. Tig subfamily.

Its subcellular location is the cytoplasm. It catalyses the reaction [protein]-peptidylproline (omega=180) = [protein]-peptidylproline (omega=0). Involved in protein export. Acts as a chaperone by maintaining the newly synthesized protein in an open conformation. Functions as a peptidyl-prolyl cis-trans isomerase. This Rippkaea orientalis (strain PCC 8801 / RF-1) (Cyanothece sp. (strain PCC 8801)) protein is Trigger factor.